We begin with the raw amino-acid sequence, 274 residues long: Putative phosphoenolpyruvate synthase regulatory protein (274 aa).

154 to 161 (GVSRCGKT) is a binding site for ADP.

Belongs to the pyruvate, phosphate/water dikinase regulatory protein family. PSRP subfamily.

It catalyses the reaction [pyruvate, water dikinase] + ADP = [pyruvate, water dikinase]-phosphate + AMP + H(+). The enzyme catalyses [pyruvate, water dikinase]-phosphate + phosphate + H(+) = [pyruvate, water dikinase] + diphosphate. Functionally, bifunctional serine/threonine kinase and phosphorylase involved in the regulation of the phosphoenolpyruvate synthase (PEPS) by catalyzing its phosphorylation/dephosphorylation. The protein is Putative phosphoenolpyruvate synthase regulatory protein of Pseudomonas aeruginosa (strain LESB58).